A 93-amino-acid polypeptide reads, in one-letter code: Putative regulatory protein LA_2599 (93 aa).

The protein belongs to the RemA family.

This is Putative regulatory protein LA_2599 from Leptospira interrogans serogroup Icterohaemorrhagiae serovar Lai (strain 56601).